A 573-amino-acid polypeptide reads, in one-letter code: DNA ligase (573 aa).

Residue Glu-250 coordinates ATP. The active-site N6-AMP-lysine intermediate is Lys-252. Arg-257, Arg-272, Glu-301, Phe-342, Arg-432, and Lys-438 together coordinate ATP.

It belongs to the ATP-dependent DNA ligase family. The cofactor is Mg(2+).

The enzyme catalyses ATP + (deoxyribonucleotide)n-3'-hydroxyl + 5'-phospho-(deoxyribonucleotide)m = (deoxyribonucleotide)n+m + AMP + diphosphate.. DNA ligase that seals nicks in double-stranded DNA during DNA replication, DNA recombination and DNA repair. This Methanococcus maripaludis (strain C5 / ATCC BAA-1333) protein is DNA ligase.